We begin with the raw amino-acid sequence, 483 residues long: MTPILTVLICLGLSLGPRTHVQAGHLPKPTLWAEPGSVIIQGSPVTLRCQGSLQAEEYHLYRENKSASWVRRIQEPGKNGQFPIPSITWEHAGRYHCQYYSHNHSSEYSDPLELVVTGAYSKPTLSALPSPVVTSGGNVTLQCVSQVAFDGFILCKEGEDEHPQRLNSHSHARGWSWAIFSVGPVSPSRRWSYRCYAYDSNSPYVWSLPSDLLELLVPGVSKKPSLSVQPGPMVAPGESLTLQCVSDVGYDRFVLYKEGERDFLQRPGWQPQAGLSQANFTLGPVSPSHGGQYRCYSAHNLSSEWSAPSDPLDILITGQFYDRPSLSVQPVPTVAPGKNVTLLCQSRGQFHTFLLTKEGAGHPPLHLRSEHQAQQNQAEFRMGPVTSAHVGTYRCYSSLSSNPYLLSLPSDPLELVVSEAAETLSPSQNKTDSTTTSLGQHPQDYTVENLIRMGVAGLVLVVLGILLFEAQHSQRSLQDAAGR.

The N-terminal stretch at 1-23 is a signal peptide; the sequence is MTPILTVLICLGLSLGPRTHVQA. The Extracellular portion of the chain corresponds to 24–449; the sequence is GHLPKPTLWA…QHPQDYTVEN (426 aa). Ig-like C2-type domains are found at residues 27-113, 117-222, 224-313, and 324-413; these read PKPT…DPLE, TGAY…GVSK, PSLS…DPLD, and PSLS…SDPL. The cysteines at positions 49 and 97 are disulfide-linked. N-linked (GlcNAc...) asparagine glycosylation is found at Asn-64, Asn-103, and Asn-138. 2 disulfides stabilise this stretch: Cys-143/Cys-195 and Cys-244/Cys-295. Residues Asn-279, Asn-300, and Asn-339 are each glycosylated (N-linked (GlcNAc...) asparagine). Cys-344 and Cys-395 are joined by a disulfide. Tyr-404 carries the 3'-nitrotyrosine modification. N-linked (GlcNAc...) asparagine glycosylation occurs at Asn-429. Residues 450–470 traverse the membrane as a helical segment; sequence LIRMGVAGLVLVVLGILLFEA. The Cytoplasmic portion of the chain corresponds to 471–483; sequence QHSQRSLQDAAGR.

Homodimer. Detected on the surface of all peripheral blood monocytes, neutrophils, basophils and eosinophils (at protein level). Expression levels are very low or not detectable on monocytes, T-cells, B-cells, dendritic cells and natural killer (NK) cells.

The protein resides in the cell membrane. It localises to the secreted. Its function is as follows. Part of the innate immune responses against microbial infection. Specifically recognizes a set of N-terminally truncated immunoglobulins that are produced via cleavage by proteases from a range of pathogenic bacteria and fungi, including L.pneumophila, M.hyorhinis, S.pneumoniae, S.aureus and C.albicans. Recognizes epitopes that are in part in the variable region of the immunoglobulin light chains, but requires also the constant region for signaling. Binds to a subset of cleaved IgM, IgG3 and IgG4 molecules, but does not bind cleaved IgA1. Binding of N-terminally truncated immunoglobulins mediates activation of neutrophils. In monocytes, activation leads to the release of CSF2, CF3, IL6, CXCL8 and CCL3 and down-regulates responses to bacterial lipopolysaccharide (LPS), possibly via down-regulation of TLR4 expression and reduced signaling via TLR4. In eosinophils, activation by ligand binding leads to the release of RNASE2, IL4 and leukotriene C4. Does not bind class I MHC antigens. The chain is Leukocyte immunoglobulin-like receptor subfamily A member 2 (LILRA2) from Homo sapiens (Human).